The following is a 295-amino-acid chain: Methylamine utilization protein MauJ (295 aa).

Its pathway is one-carbon metabolism; methylamine degradation. The polypeptide is Methylamine utilization protein MauJ (mauJ) (Methylorubrum extorquens (strain ATCC 14718 / DSM 1338 / JCM 2805 / NCIMB 9133 / AM1) (Methylobacterium extorquens)).